Consider the following 504-residue polypeptide: Glutamate--tRNA ligase (504 aa).

Positions 25–35 match the 'HIGH' region motif; that stretch reads PSPTGNPHVGL. Zn(2+) contacts are provided by cysteine 122, cysteine 124, cysteine 149, and aspartate 151. The short motif at 270–274 is the 'KMSKS' region element; the sequence is KLSKR. Lysine 273 contacts ATP.

Belongs to the class-I aminoacyl-tRNA synthetase family. Glutamate--tRNA ligase type 1 subfamily. As to quaternary structure, monomer. Requires Zn(2+) as cofactor.

Its subcellular location is the cytoplasm. The catalysed reaction is tRNA(Glu) + L-glutamate + ATP = L-glutamyl-tRNA(Glu) + AMP + diphosphate. In terms of biological role, catalyzes the attachment of glutamate to tRNA(Glu) in a two-step reaction: glutamate is first activated by ATP to form Glu-AMP and then transferred to the acceptor end of tRNA(Glu). This chain is Glutamate--tRNA ligase, found in Streptomyces griseus subsp. griseus (strain JCM 4626 / CBS 651.72 / NBRC 13350 / KCC S-0626 / ISP 5235).